Reading from the N-terminus, the 342-residue chain is Ketol-acid reductoisomerase (NADP(+)) (342 aa).

In terms of domain architecture, KARI N-terminal Rossmann spans 2-181 (VKVYYNGDIQ…GGARAGVLET (180 aa)). Residues 25–28 (YGSQ), R48, S52, and 82–85 (DEQQ) contribute to the NADP(+) site. Residue H107 is part of the active site. NADP(+) is bound at residue G133. Positions 182–327 (TFKEETETDL…RKLREMMPFV (146 aa)) constitute a KARI C-terminal knotted domain. The Mg(2+) site is built by D190, E194, E226, and E230. Position 251 (S251) interacts with substrate.

The protein belongs to the ketol-acid reductoisomerase family. It depends on Mg(2+) as a cofactor.

The enzyme catalyses (2R)-2,3-dihydroxy-3-methylbutanoate + NADP(+) = (2S)-2-acetolactate + NADPH + H(+). The catalysed reaction is (2R,3R)-2,3-dihydroxy-3-methylpentanoate + NADP(+) = (S)-2-ethyl-2-hydroxy-3-oxobutanoate + NADPH + H(+). It participates in amino-acid biosynthesis; L-isoleucine biosynthesis; L-isoleucine from 2-oxobutanoate: step 2/4. It functions in the pathway amino-acid biosynthesis; L-valine biosynthesis; L-valine from pyruvate: step 2/4. Functionally, involved in the biosynthesis of branched-chain amino acids (BCAA). Catalyzes an alkyl-migration followed by a ketol-acid reduction of (S)-2-acetolactate (S2AL) to yield (R)-2,3-dihydroxy-isovalerate. In the isomerase reaction, S2AL is rearranged via a Mg-dependent methyl migration to produce 3-hydroxy-3-methyl-2-ketobutyrate (HMKB). In the reductase reaction, this 2-ketoacid undergoes a metal-dependent reduction by NADPH to yield (R)-2,3-dihydroxy-isovalerate. This Bacillus pumilus (strain SAFR-032) protein is Ketol-acid reductoisomerase (NADP(+)).